The chain runs to 764 residues: 1,4-alpha-glucan branching enzyme GlgB (764 aa).

Aspartate 434 (nucleophile) is an active-site residue. Glutamate 487 acts as the Proton donor in catalysis.

This sequence belongs to the glycosyl hydrolase 13 family. GlgB subfamily. Monomer.

The enzyme catalyses Transfers a segment of a (1-&gt;4)-alpha-D-glucan chain to a primary hydroxy group in a similar glucan chain.. It functions in the pathway glycan biosynthesis; glycogen biosynthesis. Functionally, catalyzes the formation of the alpha-1,6-glucosidic linkages in glycogen by scission of a 1,4-alpha-linked oligosaccharide from growing alpha-1,4-glucan chains and the subsequent attachment of the oligosaccharide to the alpha-1,6 position. The polypeptide is 1,4-alpha-glucan branching enzyme GlgB (Trichormus variabilis (strain ATCC 29413 / PCC 7937) (Anabaena variabilis)).